The chain runs to 140 residues: uncharacterized protein (140 aa).

The next 3 helical transmembrane spans lie at A42–S62, A65–G85, and R96–F116.

The protein localises to the membrane. This is an uncharacterized protein from Saccharomyces cerevisiae (strain ATCC 204508 / S288c) (Baker's yeast).